The primary structure comprises 287 residues: Zinc finger protein SNAI3 (287 aa).

The segment at 1 to 20 (MPRSFLVKTHSSHRVPNYGK) is SNAG domain. 4 C2H2-type zinc fingers span residues 147–169 (FECIHCHRPYHTLAGLARHQQLH), 178–200 (FTCRYCDKEYASLGALKMHIRTH), 204–226 (CICKVCGKAFSRPWLLQGHIRTH), and 232–254 (YTCSHCSRAFADRSNLRAHLQTH). The segment at 260–282 (YRCAVCPKAFSRMSLLARHEEAG) adopts a C2H2-type 5; degenerate zinc-finger fold.

This sequence belongs to the snail C2H2-type zinc-finger protein family. In terms of tissue distribution, highly expressed in skeletal muscle and thymus. Lower expression in heart, lung and spleen.

It localises to the nucleus. Functionally, seems to inhibit myoblast differentiation. Transcriptional repressor of E-box-dependent transactivation of downstream myogenic bHLHs genes. Binds preferentially to the canonical E-box sequences 5'-CAGGTG-3' and 5'-CACCTG-3'. This Mus musculus (Mouse) protein is Zinc finger protein SNAI3 (Snai3).